Reading from the N-terminus, the 198-residue chain is Recombination protein RecR (198 aa).

A C4-type zinc finger spans residues 59–74 (CSLCCNYTDHDPCPIC). Residues 82 to 175 (TLLCIVEQPR…KVTRIAHGLP (94 aa)) enclose the Toprim domain.

Belongs to the RecR family.

Functionally, may play a role in DNA repair. It seems to be involved in an RecBC-independent recombinational process of DNA repair. It may act with RecF and RecO. In Desulfitobacterium hafniense (strain Y51), this protein is Recombination protein RecR.